A 312-amino-acid chain; its full sequence is Olfactory receptor 1D2 (312 aa).

Residues methionine 1–glutamine 25 are Extracellular-facing. The N-linked (GlcNAc...) asparagine glycan is linked to asparagine 5. Residues isoleucine 26–isoleucine 49 traverse the membrane as a helical segment. Residues asparagine 50–threonine 57 are Cytoplasmic-facing. Residues proline 58 to proline 79 traverse the membrane as a helical segment. Topologically, residues lysine 80–glutamine 100 are extracellular. A disulfide bond links cysteine 97 and cysteine 189. The chain crosses the membrane as a helical span at residues leucine 101–tyrosine 120. The Cytoplasmic segment spans residues aspartate 121 to lysine 139. Residues leucine 140–isoleucine 158 form a helical membrane-spanning segment. The Extracellular segment spans residues histidine 159–histidine 196. An N-linked (GlcNAc...) asparagine glycan is attached at asparagine 195. Residues threonine 197 to valine 219 traverse the membrane as a helical segment. Residues leucine 220–lysine 236 lie on the Cytoplasmic side of the membrane. A helical membrane pass occupies residues alanine 237–tyrosine 259. Residues leucine 260 to serine 271 are Extracellular-facing. A helical membrane pass occupies residues valine 272 to leucine 291. Residues arginine 292 to threonine 312 are Cytoplasmic-facing.

It belongs to the G-protein coupled receptor 1 family.

The protein resides in the cell membrane. In terms of biological role, odorant receptor. In Gorilla gorilla gorilla (Western lowland gorilla), this protein is Olfactory receptor 1D2 (OR1D2).